The sequence spans 247 residues: Isoprenyl transferase (247 aa).

Asp18 is a catalytic residue. Mg(2+) is bound at residue Asp18. Substrate is bound by residues 19 to 22 (GNGR), Trp23, Arg31, His35, and 63 to 65 (SSE). Asn66 acts as the Proton acceptor in catalysis. Substrate contacts are provided by residues Trp67, Arg69, Arg186, and 192–194 (RLS). Glu205 provides a ligand contact to Mg(2+).

The protein belongs to the UPP synthase family. As to quaternary structure, homodimer. Mg(2+) is required as a cofactor.

Catalyzes the condensation of isopentenyl diphosphate (IPP) with allylic pyrophosphates generating different type of terpenoids. This chain is Isoprenyl transferase, found in Rhizobium meliloti (strain 1021) (Ensifer meliloti).